The sequence spans 346 residues: L-glyceraldehyde 3-phosphate reductase (346 aa).

Residues W33, D61, Y66, S168, Q193, T223, L225, Q227, K233, S303, Q307, and N311 each coordinate NADP(+).

This sequence belongs to the shaker potassium channel beta subunit family. In terms of assembly, homotetramer. Homooctamer.

The catalysed reaction is a primary alcohol + NADP(+) = an aldehyde + NADPH + H(+). It catalyses the reaction hydroxyacetone + NADP(+) = methylglyoxal + NADPH + H(+). Functionally, aldo-keto reductase that catalyzes the stereospecific, NADPH-dependent reduction of L-glyceraldehyde 3-phosphate (L-GAP) to L-glycerol 3-phosphate (L-G3P). The physiological role of Gpr is the detoxification of L-GAP, which may be formed via non-enzymatic and/or enzymatic racemization of D-GAP. Also contributes to cellular methylglyoxal detoxification by catalyzing the NADPH-dependent conversion of methylglyoxal to acetol. However, the catalytic efficiency of methylglyoxal reductase activity is more than 2 orders of magnitude lower than the L-GAP reductase activity. In addition, exhibits activity with glyoxal and probably plays a significant role in detoxification of glyoxal in vivo. Shows broad specificity and can use aromatic aldehydes such as 4-nitrobenzaldehyde and benzaldehyde, D,L-glyceraldehyde, phenylglyoxal, isatin and the model substrate 4-nitrobenzaldehyde. In Escherichia coli (strain K12), this protein is L-glyceraldehyde 3-phosphate reductase.